The chain runs to 218 residues: Ribose-5-phosphate isomerase A (218 aa).

Substrate-binding positions include T28–T31, D81–D84, and K94–G97. Catalysis depends on E103, which acts as the Proton acceptor. K121 is a binding site for substrate.

It belongs to the ribose 5-phosphate isomerase family. In terms of assembly, homodimer.

It carries out the reaction aldehydo-D-ribose 5-phosphate = D-ribulose 5-phosphate. It participates in carbohydrate degradation; pentose phosphate pathway; D-ribose 5-phosphate from D-ribulose 5-phosphate (non-oxidative stage): step 1/1. Its function is as follows. Catalyzes the reversible conversion of ribose-5-phosphate to ribulose 5-phosphate. The polypeptide is Ribose-5-phosphate isomerase A (Vibrio parahaemolyticus serotype O3:K6 (strain RIMD 2210633)).